Reading from the N-terminus, the 148-residue chain is Endoribonuclease YbeY (148 aa).

3 residues coordinate Zn(2+): histidine 112, histidine 116, and histidine 122.

It belongs to the endoribonuclease YbeY family. Requires Zn(2+) as cofactor.

Its subcellular location is the cytoplasm. Single strand-specific metallo-endoribonuclease involved in late-stage 70S ribosome quality control and in maturation of the 3' terminus of the 16S rRNA. The sequence is that of Endoribonuclease YbeY from Albidiferax ferrireducens (strain ATCC BAA-621 / DSM 15236 / T118) (Rhodoferax ferrireducens).